The sequence spans 380 residues: Queuine tRNA-ribosyltransferase (380 aa).

Asp-96 serves as the catalytic Proton acceptor. Substrate is bound by residues 96 to 100 (DSGGF), Asp-150, Gln-193, and Gly-220. Residues 251–257 (GVGAPDS) form an RNA binding region. Asp-270 (nucleophile) is an active-site residue. An RNA binding; important for wobble base 34 recognition region spans residues 275–279 (TRIAR). Residues Cys-308, Cys-310, Cys-313, and His-339 each contribute to the Zn(2+) site.

The protein belongs to the queuine tRNA-ribosyltransferase family. As to quaternary structure, homodimer. Within each dimer, one monomer is responsible for RNA recognition and catalysis, while the other monomer binds to the replacement base PreQ1. Requires Zn(2+) as cofactor.

It catalyses the reaction 7-aminomethyl-7-carbaguanine + guanosine(34) in tRNA = 7-aminomethyl-7-carbaguanosine(34) in tRNA + guanine. It functions in the pathway tRNA modification; tRNA-queuosine biosynthesis. In terms of biological role, catalyzes the base-exchange of a guanine (G) residue with the queuine precursor 7-aminomethyl-7-deazaguanine (PreQ1) at position 34 (anticodon wobble position) in tRNAs with GU(N) anticodons (tRNA-Asp, -Asn, -His and -Tyr). Catalysis occurs through a double-displacement mechanism. The nucleophile active site attacks the C1' of nucleotide 34 to detach the guanine base from the RNA, forming a covalent enzyme-RNA intermediate. The proton acceptor active site deprotonates the incoming PreQ1, allowing a nucleophilic attack on the C1' of the ribose to form the product. After dissociation, two additional enzymatic reactions on the tRNA convert PreQ1 to queuine (Q), resulting in the hypermodified nucleoside queuosine (7-(((4,5-cis-dihydroxy-2-cyclopenten-1-yl)amino)methyl)-7-deazaguanosine). The chain is Queuine tRNA-ribosyltransferase from Streptococcus pyogenes serotype M1.